The sequence spans 1120 residues: Hachiman protein HamB (1120 aa).

The region spanning 278–452 (DGELLKNDGF…WIGEDDKAKR (175 aa)) is the Helicase ATP-binding domain. An ATP-binding site is contributed by 291–298 (MPTSSGKT). Residues 395–398 (DEGH) carry the DEAH box motif. The Helicase C-terminal domain maps to 521–710 (ATATKMLDVG…NIEKATSGLY (190 aa)).

The protein belongs to the helicase family.

Functionally, component of antiviral defense system Hachiman, composed of HamA and HamB. Expression of Hachiman in B.subtilis (strain BEST7003) confers resistance to phages phi105, phi29, phi3T, rho14, SBSphiJ, SpBeta and SPR. Probably a helicase. The protein is Hachiman protein HamB of Bacillus cereus.